Consider the following 65-residue polypeptide: Disintegrin CC5 (65 aa).

The Disintegrin domain occupies 1-65 (MNSAHPCCDP…SDCPRNRYKS (65 aa)). Disulfide bonds link Cys-7–Cys-30, Cys-21–Cys-27, Cys-26–Cys-51, and Cys-39–Cys-58. The Cell attachment site signature appears at 43 to 45 (RGD).

This sequence belongs to the disintegrin family. Dimeric disintegrin subfamily. As to quaternary structure, homodimer; disulfide-linked. Expressed by the venom gland.

The protein localises to the secreted. Functionally, binds and inhibits integrins alpha-IIb/beta-3 (ITGA2B/ITGB3), alpha-V/beta-3 (ITGAV/ITGB3) and alpha-5/beta-1 (ITGA5/ITGB1). In Cerastes cerastes (Horned desert viper), this protein is Disintegrin CC5.